Consider the following 296-residue polypeptide: tRNA dimethylallyltransferase (296 aa).

ATP is bound at residue 19 to 26; that stretch reads GPTASGKS. 21-26 lines the substrate pocket; sequence TASGKS.

This sequence belongs to the IPP transferase family. In terms of assembly, monomer. Mg(2+) serves as cofactor.

The enzyme catalyses adenosine(37) in tRNA + dimethylallyl diphosphate = N(6)-dimethylallyladenosine(37) in tRNA + diphosphate. Its function is as follows. Catalyzes the transfer of a dimethylallyl group onto the adenine at position 37 in tRNAs that read codons beginning with uridine, leading to the formation of N6-(dimethylallyl)adenosine (i(6)A). This chain is tRNA dimethylallyltransferase, found in Dinoroseobacter shibae (strain DSM 16493 / NCIMB 14021 / DFL 12).